Here is a 312-residue protein sequence, read N- to C-terminus: Malate dehydrogenase (312 aa).

NAD(+) is bound by residues 7-13 (GAAGGIG) and D34. Residues R81 and R87 each coordinate substrate. Residues N94 and 117–119 (ITN) each bind NAD(+). Positions 119 and 153 each coordinate substrate. The active-site Proton acceptor is the H177. An NAD(+)-binding site is contributed by M227.

Belongs to the LDH/MDH superfamily. MDH type 1 family. In terms of assembly, homodimer.

The catalysed reaction is (S)-malate + NAD(+) = oxaloacetate + NADH + H(+). In terms of biological role, catalyzes the reversible oxidation of malate to oxaloacetate. In Salmonella gallinarum (strain 287/91 / NCTC 13346), this protein is Malate dehydrogenase.